A 375-amino-acid polypeptide reads, in one-letter code: Chaperone protein DnaJ (375 aa).

Residues 5–70 (DYYSLLEVER…QKRAAYDRYG (66 aa)) form the J domain. A CR-type zinc finger spans residues 135–213 (GKTVDIEIDV…CHGEGRCEKH (79 aa)). Cys-148, Cys-151, Cys-165, Cys-168, Cys-187, Cys-190, Cys-201, and Cys-204 together coordinate Zn(2+). 4 CXXCXGXG motif repeats span residues 148 to 155 (CDACHGSG), 165 to 172 (CDTCHGSG), 187 to 194 (CPVCQGKG), and 201 to 208 (CPECHGEG).

Belongs to the DnaJ family. As to quaternary structure, homodimer. Requires Zn(2+) as cofactor.

The protein resides in the cytoplasm. Its function is as follows. Participates actively in the response to hyperosmotic and heat shock by preventing the aggregation of stress-denatured proteins and by disaggregating proteins, also in an autonomous, DnaK-independent fashion. Unfolded proteins bind initially to DnaJ; upon interaction with the DnaJ-bound protein, DnaK hydrolyzes its bound ATP, resulting in the formation of a stable complex. GrpE releases ADP from DnaK; ATP binding to DnaK triggers the release of the substrate protein, thus completing the reaction cycle. Several rounds of ATP-dependent interactions between DnaJ, DnaK and GrpE are required for fully efficient folding. Also involved, together with DnaK and GrpE, in the DNA replication of plasmids through activation of initiation proteins. The chain is Chaperone protein DnaJ from Zymomonas mobilis subsp. mobilis (strain ATCC 31821 / ZM4 / CP4).